Here is a 202-residue protein sequence, read N- to C-terminus: Superoxide dismutase [Mn], mitochondrial (202 aa).

The N-terminal 5 residues, 1–5, are a transit peptide targeting the mitochondrion; it reads HGRGM. Histidine 31 is a Mn(2+) binding site. At tyrosine 39 the chain carries 3'-nitrotyrosine. Lysine 49 is modified (N6-acetyllysine; alternate). At lysine 49 the chain carries N6-succinyllysine; alternate. Histidine 79 contributes to the Mn(2+) binding site. N6-acetyllysine is present on lysine 95. An N6-acetyllysine; alternate mark is found at lysine 103 and lysine 111. Lysine 103 and lysine 111 each carry N6-succinyllysine; alternate. Mn(2+)-binding residues include aspartate 164 and histidine 168. Position 183 is an N6-acetyllysine (lysine 183).

Belongs to the iron/manganese superoxide dismutase family. In terms of assembly, homotetramer. It depends on Mn(2+) as a cofactor. Nitrated under oxidative stress. Nitration coupled with oxidation inhibits the catalytic activity. Post-translationally, acetylation at Lys-122 decreases enzymatic activity. Deacetylated by SIRT3 upon exposure to ionizing radiations or after long fasting. In terms of processing, polyubiquitinated; leading to proteasomal degradation. Deubiquitinated by USP36 which increases protein stability.

It localises to the mitochondrion matrix. It catalyses the reaction 2 superoxide + 2 H(+) = H2O2 + O2. Destroys superoxide anion radicals which are normally produced within the cells and which are toxic to biological systems. The polypeptide is Superoxide dismutase [Mn], mitochondrial (SOD2) (Oryctolagus cuniculus (Rabbit)).